Here is a 166-residue protein sequence, read N- to C-terminus: Ureidoglycolate lyase (166 aa).

It belongs to the ureidoglycolate lyase family. As to quaternary structure, homodimer. Ni(2+) serves as cofactor.

The enzyme catalyses (S)-ureidoglycolate = urea + glyoxylate. It participates in nitrogen metabolism; (S)-allantoin degradation. In terms of biological role, catalyzes the catabolism of the allantoin degradation intermediate (S)-ureidoglycolate, generating urea and glyoxylate. Involved in the utilization of allantoin as nitrogen source. The chain is Ureidoglycolate lyase from Rhizobium leguminosarum bv. trifolii (strain WSM2304).